Reading from the N-terminus, the 684-residue chain is Glycine--tRNA ligase beta subunit (684 aa).

The protein belongs to the class-II aminoacyl-tRNA synthetase family. In terms of assembly, tetramer of two alpha and two beta subunits.

It is found in the cytoplasm. It catalyses the reaction tRNA(Gly) + glycine + ATP = glycyl-tRNA(Gly) + AMP + diphosphate. In Pseudomonas aeruginosa (strain ATCC 15692 / DSM 22644 / CIP 104116 / JCM 14847 / LMG 12228 / 1C / PRS 101 / PAO1), this protein is Glycine--tRNA ligase beta subunit.